A 307-amino-acid chain; its full sequence is Probable GTP 3',8-cyclase (307 aa).

The 227-residue stretch at 5–231 (RFGRPVTNLR…MHRRKKYFIP (227 aa)) folds into the Radical SAM core domain. A GTP-binding site is contributed by arginine 14. Cysteine 21, cysteine 25, and cysteine 28 together coordinate [4Fe-4S] cluster. Lysine 62 contacts GTP. S-adenosyl-L-methionine is bound at residue glycine 66. Residue threonine 91 coordinates GTP. Serine 115 is an S-adenosyl-L-methionine binding site. Residue lysine 151 participates in GTP binding. Methionine 190 is an S-adenosyl-L-methionine binding site. The [4Fe-4S] cluster site is built by cysteine 251 and cysteine 254. 256–258 (RLR) contacts GTP. A [4Fe-4S] cluster-binding site is contributed by cysteine 268.

This sequence belongs to the radical SAM superfamily. MoaA family. It depends on [4Fe-4S] cluster as a cofactor.

It carries out the reaction GTP + AH2 + S-adenosyl-L-methionine = (8S)-3',8-cyclo-7,8-dihydroguanosine 5'-triphosphate + 5'-deoxyadenosine + L-methionine + A + H(+). Its pathway is cofactor biosynthesis; molybdopterin biosynthesis. Functionally, catalyzes the cyclization of GTP to (8S)-3',8-cyclo-7,8-dihydroguanosine 5'-triphosphate. The polypeptide is Probable GTP 3',8-cyclase (Thermococcus kodakarensis (strain ATCC BAA-918 / JCM 12380 / KOD1) (Pyrococcus kodakaraensis (strain KOD1))).